Reading from the N-terminus, the 887-residue chain is Multiple RNA-binding domain-containing protein 1 (887 aa).

The RRM 1 domain occupies 2-94; that stretch reads SRIIVKGLPV…SKIEVSMAKS (93 aa). Disordered stretches follow at residues 121–143, 203–276, and 297–336; these read KLLQ…NIDD, KEEN…RNLA, and SEAE…DEEL. Residues Ser220 and Ser264 each carry the phosphoserine modification. The segment covering 264–276 has biased composition (basic and acidic residues); sequence SDEKENEKRRNLA. A compositionally biased stretch (polar residues) spans 306–315; sequence SSYATEQNES. Residues 316 to 325 show a composition bias toward basic and acidic residues; it reads LDTKKEEQPE. RRM domains follow at residues 345-423, 532-604, 663-746, and 763-840; these read GRLF…PGEE, KVIL…RGPK, VSIF…LSHR, and GKII…YAEE. The tract at residues 864–887 is disordered; the sequence is EMAALRNGGGRKKLDVDDEENEGF.

The protein belongs to the RRM MRD1 family. Interacts with NOP1. Binds to the 35S pre-rRNA and the U3 snoRNA.

Its subcellular location is the nucleus. Its function is as follows. Involved in pre-rRNA processing. Required for maintaining steady-state levels of 40S ribosomal subunit. Required for the initial processing of pre-rRNA at the A0 to A2 sites, leading to the processing of the 23S pre-rRNA intermediate to the 18S rRNA. This Saccharomyces cerevisiae (strain ATCC 204508 / S288c) (Baker's yeast) protein is Multiple RNA-binding domain-containing protein 1 (MRD1).